The chain runs to 115 residues: Histone H2A-Bbd type 2/3 (115 aa).

The tract at residues 1-21 (MPRRRRRRGSSGAGGRGRTCS) is disordered. The segment at 87–115 (LLDMVVHNDRLLSTLFNTTTISQVAPGED) is docking domain.

This sequence belongs to the histone H2A family. The nucleosome is a histone octamer containing two molecules each of H2A, H2B, H3 and H4 assembled in one H3-H4 heterotetramer and two H2A-H2B heterodimers. May be incorporated into a proportion of nucleosomes, replacing one or more H2A molecules. Present in mature sperm.

The protein resides in the nucleus. The protein localises to the chromosome. Its function is as follows. Atypical histone H2A which can replace conventional H2A in some nucleosomes and is associated with active transcription and mRNA processing. Nucleosomes wrap and compact DNA into chromatin, limiting DNA accessibility to the cellular machineries which require DNA as a template. Histones thereby play a central role in transcription regulation, DNA repair, DNA replication and chromosomal stability. Nucleosomes containing this histone are less rigid and organize less DNA than canonical nucleosomes in vivo. They are enriched in actively transcribed genes and associate with the elongating form of RNA polymerase. They associate with spliceosome components and are required for mRNA splicing. May participate in spermatogenesis. The sequence is that of Histone H2A-Bbd type 2/3 from Homo sapiens (Human).